The primary structure comprises 82 residues: Toxin GTx1-15 (82 aa).

Residues 1–21 form the signal peptide; that stretch reads MKTSVVFVIAGLALLSVACYA. Positions 22-46 are excised as a propeptide; it reads SELKEQSSINEVLSTIFHFEQPEER. Disulfide bonds link Cys-48-Cys-63, Cys-55-Cys-69, and Cys-62-Cys-76. Phenylalanine amide is present on Phe-80.

It belongs to the neurotoxin 10 (Hwtx-1) family. 08 (Gtx1-15) subfamily. Expressed by the venom gland.

It localises to the secreted. Functionally, potent voltage-gated sodium channel blocker. Potently inhibits the voltage-gated sodium channels Nav1.7/SCN9A (IC(50)=0.58-10 nM). Shows a moderate activity on Nav1.1/SCN1A (IC(50)=6 nM), Nav1.2/SCN2A (IC(50)=5-128 nM), Nav1.3/SCN3A (IC(50)=20.3-170 nM), and Nav1.6/SCN8A (IC(50)=17-20.1 nM). Shows an unclear inhibition of Nav1.4/SCN4A (IC(50)=200 nM to &gt;10 uM), Nav1.5/SCN5A (IC(50)=140 nM to &gt;10 uM) and Nav1.8/SCN10A (IC(50)=68-12200 nM). Weakly blocks the low voltage-gated calcium channels Cav3.1/CACNA1G (30% inhibition of the peak current by 9.8 nM of the toxin). It shows moderate affinity for lipid bilayers. The sequence is that of Toxin GTx1-15 from Grammostola rosea (Chilean rose tarantula).